We begin with the raw amino-acid sequence, 327 residues long: Undecaprenyl-phosphate 4-deoxy-4-formamido-L-arabinose transferase (327 aa).

2 helical membrane-spanning segments follow: residues 236–256 and 270–290; these read LSVF…LLVV and VFML…AMGL.

It belongs to the glycosyltransferase 2 family.

It localises to the cell inner membrane. It carries out the reaction UDP-4-deoxy-4-formamido-beta-L-arabinose + di-trans,octa-cis-undecaprenyl phosphate = 4-deoxy-4-formamido-alpha-L-arabinopyranosyl di-trans,octa-cis-undecaprenyl phosphate + UDP. It participates in glycolipid biosynthesis; 4-amino-4-deoxy-alpha-L-arabinose undecaprenyl phosphate biosynthesis; 4-amino-4-deoxy-alpha-L-arabinose undecaprenyl phosphate from UDP-4-deoxy-4-formamido-beta-L-arabinose and undecaprenyl phosphate: step 1/2. Its pathway is bacterial outer membrane biogenesis; lipopolysaccharide biosynthesis. Its function is as follows. Catalyzes the transfer of 4-deoxy-4-formamido-L-arabinose from UDP to undecaprenyl phosphate. The modified arabinose is attached to lipid A and is required for resistance to polymyxin and cationic antimicrobial peptides. This Enterobacter sp. (strain 638) protein is Undecaprenyl-phosphate 4-deoxy-4-formamido-L-arabinose transferase.